The primary structure comprises 473 residues: Photosystem II CP43 reaction center protein (473 aa).

A propeptide spanning residues 1–14 (MKILYSLRRFYHVE) is cleaved from the precursor. Thr15 is subject to N-acetylthreonine. Thr15 carries the phosphothreonine modification. Helical transmembrane passes span 69 to 93 (LFEV…PHLA), 134 to 155 (LLGP…KDRN), 178 to 200 (KALY…RKIT), 255 to 275 (KPFA…LSYS), and 291 to 312 (WFNN…ASQA). Residue Glu367 coordinates [CaMn4O5] cluster. Residues 447–471 (RARAAAAGFEKGIDRDLEPVLYMNP) form a helical membrane-spanning segment.

The protein belongs to the PsbB/PsbC family. PsbC subfamily. In terms of assembly, PSII is composed of 1 copy each of membrane proteins PsbA, PsbB, PsbC, PsbD, PsbE, PsbF, PsbH, PsbI, PsbJ, PsbK, PsbL, PsbM, PsbT, PsbX, PsbY, PsbZ, Psb30/Ycf12, at least 3 peripheral proteins of the oxygen-evolving complex and a large number of cofactors. It forms dimeric complexes. It depends on Binds multiple chlorophylls and provides some of the ligands for the Ca-4Mn-5O cluster of the oxygen-evolving complex. It may also provide a ligand for a Cl- that is required for oxygen evolution. PSII binds additional chlorophylls, carotenoids and specific lipids. as a cofactor.

It is found in the plastid. It localises to the chloroplast thylakoid membrane. One of the components of the core complex of photosystem II (PSII). It binds chlorophyll and helps catalyze the primary light-induced photochemical processes of PSII. PSII is a light-driven water:plastoquinone oxidoreductase, using light energy to abstract electrons from H(2)O, generating O(2) and a proton gradient subsequently used for ATP formation. The chain is Photosystem II CP43 reaction center protein from Lolium perenne (Perennial ryegrass).